Consider the following 443-residue polypeptide: Aspartate--tRNA(Asp/Asn) ligase (443 aa).

E175 contacts L-aspartate. Residues Q197–K200 are aspartate. Residue R219 coordinates L-aspartate. ATP contacts are provided by residues R219 to E221, R227 to L229, and E366. 2 residues coordinate Mg(2+): E366 and S369. L-aspartate contacts are provided by S369 and R373. ATP is bound at residue G414–R417.

This sequence belongs to the class-II aminoacyl-tRNA synthetase family. Type 2 subfamily. As to quaternary structure, homodimer. Mg(2+) serves as cofactor.

Its subcellular location is the cytoplasm. It carries out the reaction tRNA(Asx) + L-aspartate + ATP = L-aspartyl-tRNA(Asx) + AMP + diphosphate. Its function is as follows. Aspartyl-tRNA synthetase with relaxed tRNA specificity since it is able to aspartylate not only its cognate tRNA(Asp) but also tRNA(Asn). Reaction proceeds in two steps: L-aspartate is first activated by ATP to form Asp-AMP and then transferred to the acceptor end of tRNA(Asp/Asn). This is Aspartate--tRNA(Asp/Asn) ligase from Methanococcoides burtonii (strain DSM 6242 / NBRC 107633 / OCM 468 / ACE-M).